The primary structure comprises 640 residues: Portal protein (640 aa).

The protein belongs to the herpesviridae portal protein family. In terms of assembly, homododecamerizes. Interacts with terminase subunits TRM1 and TRM3.

It is found in the virion. The protein resides in the host nucleus. In terms of biological role, forms a portal in the viral capsid through which viral DNA is translocated during DNA packaging. Assembles as a dodecamer at a single fivefold axe of the T=16 icosahedric capsid. Binds to the molecular motor that translocates the viral DNA, termed terminase. The chain is Portal protein (U76) from Human herpesvirus 7 (strain JI) (HHV-7).